The following is a 162-amino-acid chain: Sec-independent protein translocase protein TatB (162 aa).

A helical transmembrane segment spans residues 1 to 21; the sequence is MFDLGWTELLVIGVVALIVVG. Disordered stretches follow at residues 69–111 and 124–162; these read ATNP…DRAE and AADR…ETKA. Basic and acidic residues-rich tracts occupy residues 83 to 111 and 124 to 141; these read ATRD…DRAE and AADR…KAEE. Low complexity predominate over residues 144 to 155; sequence AALSATPASTAS.

Belongs to the TatB family. In terms of assembly, the Tat system comprises two distinct complexes: a TatABC complex, containing multiple copies of TatA, TatB and TatC subunits, and a separate TatA complex, containing only TatA subunits. Substrates initially bind to the TatABC complex, which probably triggers association of the separate TatA complex to form the active translocon.

It localises to the cell inner membrane. Functionally, part of the twin-arginine translocation (Tat) system that transports large folded proteins containing a characteristic twin-arginine motif in their signal peptide across membranes. Together with TatC, TatB is part of a receptor directly interacting with Tat signal peptides. TatB may form an oligomeric binding site that transiently accommodates folded Tat precursor proteins before their translocation. This is Sec-independent protein translocase protein TatB from Ruegeria sp. (strain TM1040) (Silicibacter sp.).